We begin with the raw amino-acid sequence, 419 residues long: MSKKLALFGGTPVRNEEFYDGPHIGPHDLDRLKSVLDSGNFGGIPFPNTHHTAFADLFTGKLGAPYGLMVSNGTISLSIALRALGVRAGDEVITTGYTWMGTAAAIVHINAVPVLVDIDPTTWCIDPAAVEAAITPRTKVIVPVHLGNQIADLDALRAIADKHGLAILEDTAHGHFAEWRGQCVGTHGDAGSFSFESSKIMTAGEGGFLVARDEDVYQRMMSLANCGRKEPGYDGFAGRTLGWNARASELQAAFMIGQVEQHDALHAKRAASAAKLTAGLAEIGGFTPVGNDDPRITRRQYYEVIYRFDPAAWEGLHRDEVLSAILAEGIELEGDAFYPPVHKSELFAVDAVHWPMIAERYGDRIGPDSVDLPVADRAAADESVWVHHALLTGDDKDLGDILEAVAKVRDNLRELHDAS.

Lysine 199 carries the N6-(pyridoxal phosphate)lysine modification.

The protein belongs to the DegT/DnrJ/EryC1 family. L-glutamine:2-deoxy-scyllo-inosose/scyllo-inosose aminotransferase subfamily. Pyridoxal 5'-phosphate serves as cofactor.

It catalyses the reaction 3-amino-2,3-dideoxy-scyllo-inosose + L-glutamine = 2-deoxystreptamine + 2-oxoglutaramate. Its pathway is metabolic intermediate biosynthesis; 2-deoxystreptamine biosynthesis; 2-deoxystreptamine from D-glucose 6-phosphate: step 4/4. The protein operates within antibiotic biosynthesis; kanamycin biosynthesis. Its function is as follows. Catalyzes the transamination of 3-amino-2,3-dideoxy-scyllo-inosose (amino-DOI) into 2-deoxystreptamine (DOS). This chain is Putative L-glutamine:3-amino-2,3-dideoxy-scyllo-inosose aminotransferase (kanD), found in Streptomyces kanamyceticus.